The sequence spans 261 residues: Carbonic anhydrase 1 (261 aa).

Ala-2 carries the post-translational modification N-acetylalanine. The Alpha-carbonic anhydrase domain occupies 4-261; the sequence is SDWGYDSPNG…LKGRTVRAFF (258 aa). His-65 functions as the Proton donor/acceptor in the catalytic mechanism. Zn(2+) is bound by residues His-95, His-97, and His-120. Residues Thr-200 and 200–201 contribute to the substrate site; that span reads TH.

The protein belongs to the alpha-carbonic anhydrase family. Zn(2+) serves as cofactor.

The protein resides in the cytoplasm. It carries out the reaction hydrogencarbonate + H(+) = CO2 + H2O. It catalyses the reaction urea = cyanamide + H2O. Its activity is regulated as follows. Inhibited by acetazolamide. Catalyzes the reversible hydration of carbon dioxide. Can hydrate cyanamide to urea. This Equus caballus (Horse) protein is Carbonic anhydrase 1 (CA1).